Consider the following 223-residue polypeptide: PRA1 family protein B5 (223 aa).

Transmembrane regions (helical) follow at residues 83–103, 105–125, 146–166, 170–190, and 196–216; these read SSYF…FSLL, HPFS…LYLF, GGLI…SVLI, MIGI…DLFL, and AASG…APSA.

Belongs to the PRA1 family. As to quaternary structure, interacts with PRA1B1, PRA1B2, PRA1B3, PRA1B4, PRA1B6 and PRA1E. Expressed in roots, lateral roots, lateral root caps, columella cells, leaves, and shoot apex.

The protein resides in the endosome membrane. May be involved in both secretory and endocytic intracellular trafficking in the endosomal/prevacuolar compartments. In Arabidopsis thaliana (Mouse-ear cress), this protein is PRA1 family protein B5 (PRA1B5).